A 301-amino-acid chain; its full sequence is Ribosomal RNA large subunit methyltransferase F (301 aa).

Belongs to the methyltransferase superfamily. METTL16/RlmF family.

The protein localises to the cytoplasm. It carries out the reaction adenosine(1618) in 23S rRNA + S-adenosyl-L-methionine = N(6)-methyladenosine(1618) in 23S rRNA + S-adenosyl-L-homocysteine + H(+). Its function is as follows. Specifically methylates the adenine in position 1618 of 23S rRNA. The protein is Ribosomal RNA large subunit methyltransferase F of Colwellia psychrerythraea (strain 34H / ATCC BAA-681) (Vibrio psychroerythus).